A 6919-amino-acid polypeptide reads, in one-letter code: Nonribosomal peptide synthetase easA (6919 aa).

A Carrier 1 domain is found at 17–93 (TNNEVVEKDI…ELCQSVKLAE (77 aa)). Ser54 carries the O-(pantetheine 4'-phosphoryl)serine modification. An epimerization 1 region spans residues 123-427 (EAQKLYASTK…FLRKVKDTRM (305 aa)). The interval 294 to 319 (FRRSTPVESTNDERNTNERQHNRHQN) is disordered. Positions 304-319 (NDERNTNERQHNRHQN) are enriched in basic and acidic residues. The condensation 1 stretch occupies residues 604–981 (LNVELDCGRL…ISTTQEINQL (378 aa)). The interval 1003–1394 (QRLRRPDAWA…GRRDTQIKVR (392 aa)) is adenylation 1. The 78-residue stretch at 1531-1608 (EPETLLERQV…QLAQTAEVKD (78 aa)) folds into the Carrier 2 domain. Ser1569 bears the O-(pantetheine 4'-phosphoryl)serine mark. The epimerization 2 stretch occupies residues 1617–2031 (LLSPMQKWYF…ANAISALGTE (415 aa)). The interval 2072–2509 (VEDIYPCSPI…VGQLNTVTPK (438 aa)) is condensation 2. Residues 2541–2930 (RPNATAVCAW…ARKDSQVKVR (390 aa)) are adenylation 2. The Carrier 3 domain occupies 3067–3143 (APSTFMEKKL…EMAAHLEAQM (77 aa)). Residue Ser3104 is modified to O-(pantetheine 4'-phosphoryl)serine. Residues 3188–3599 (EDVYPCTPLQ…LLSKDEARRL (412 aa)) are condensation 3. The segment at 3620-4018 (QHVSTNPYAP…GRRDGQVKIR (399 aa)) is adenylation 3. The Carrier 4 domain occupies 4151-4228 (TPSTSEEKNI…QLAKKAVIKT (78 aa)). Ser4188 is subject to O-(pantetheine 4'-phosphoryl)serine. Residues 4282–4708 (ESIYYCSPIQ…EIDVIPTGDV (427 aa)) are condensation 4. The tract at residues 4732–5133 (EQALSQPGAQ…GRADGQIKIR (402 aa)) is adenylation 4. The Carrier 5 domain maps to 5260–5337 (ALSTETERRL…DMANTIANSE (78 aa)). Ser5296 is modified (O-(pantetheine 4'-phosphoryl)serine). The segment at 5380 to 5775 (EDAYPCTPLQ…VFGQLQSAAN (396 aa)) is condensation 5. Positions 5824–6216 (SCPDAQAVHA…IGRRDTQVKI (393 aa)) are adenylation 5. One can recognise a Carrier 6 domain in the interval 6344–6421 (EPATVTERLL…DMATLIDRKT (78 aa)). An O-(pantetheine 4'-phosphoryl)serine modification is found at Ser6381.

It functions in the pathway antibiotic biosynthesis. In terms of biological role, nonribosomal peptide synthetase; part of the gene cluster that mediates the biosynthesis of emericellamides, secondary metabolites acting as antibiotics. The biosynthesis of emericellamides initiates from the highly reducing polyketide synthase easB which catalyzes the formation of the linear polyketide chain. EasB produces several polyketides that can be further processed by the downstream enzymes. The polyketides are released from easB as linear polyketide carboxylic acids, which are converted to CoA thioesters by the acyl-CoA ligase easD. The substrates are then loaded onto the acyltransferase easC, which shuttles them to the first thiolation (T) domain of the nonribosomal peptide synthetase easA. EasA then performs condensation of the polyketides with one glycine, two alanine, one valine and one leucine residues. A last step of cyclization leads to the production of emericellamides. In Emericella nidulans (strain FGSC A4 / ATCC 38163 / CBS 112.46 / NRRL 194 / M139) (Aspergillus nidulans), this protein is Nonribosomal peptide synthetase easA.